Consider the following 89-residue polypeptide: Small ribosomal subunit protein uS17 (89 aa).

It belongs to the universal ribosomal protein uS17 family. As to quaternary structure, part of the 30S ribosomal subunit.

In terms of biological role, one of the primary rRNA binding proteins, it binds specifically to the 5'-end of 16S ribosomal RNA. The chain is Small ribosomal subunit protein uS17 from Polaromonas sp. (strain JS666 / ATCC BAA-500).